A 556-amino-acid chain; its full sequence is MARFGLPALLCTLAVLSAALLAAELKSKSCSEVRRLYVSKGFNKNDAPLHEINGDHLKICPQGSTCCSQEMEEKYSLQSKDDFKSVVSEQCNHLQAVFASRYKKFDEFFKELLENAEKSLNDMFVKTYGHLYMQNSELFKDLFVELKRYYVVGNVNLEEMLNDFWARLLERMFRLVNSQYHFTDEYLECVSKYTEQLKPFGDVPRKLKLQVTRAFVAARTFAQGLAVAGDVVSKVSVVNPTAQCTHALLKMIYCSHCRGLVTVKPCYNYCSNIMRGCLANQGDLDFEWNNFIDAMLMVAERLEGPFNIESVMDPIDVKISDAIMNMQDNSVQVSQKVFQGCGPPKPLPAGRISRSISESAFSARFRPHHPEERPTTAAGTSLDRLVTDVKEKLKQAKKFWSSLPSNVCNDERMAAGNGNEDDCWNGKGKSRYLFAVTGNGLANQGNNPEVQVDTSKPDILILRQIMALRVMTSKMKNAYNGNDVDFFDISDESSGEGSGSGCEYQQCPSEFDYNATDHAGKSANEKADSAGVRPGAQAYLLTVFCILFLVMQREWR.

Residues 1–18 form the signal peptide; sequence MARFGLPALLCTLAVLSA. At S357 the chain carries Phosphoserine. O-linked (Xyl...) (glycosaminoglycan) serine glycosylation is found at S494, S498, and S500. N514 carries N-linked (GlcNAc...) asparagine glycosylation. S529 is lipidated: GPI-anchor amidated serine. A propeptide spans 530 to 556 (removed in mature form); that stretch reads AGVRPGAQAYLLTVFCILFLVMQREWR.

It belongs to the glypican family.

It localises to the cell membrane. Its subcellular location is the secreted. It is found in the extracellular space. Functionally, cell surface proteoglycan that bears heparan sulfate. May be involved in the development of kidney tubules and of the central nervous system. The polypeptide is Glypican-4 (GPC4) (Homo sapiens (Human)).